A 182-amino-acid chain; its full sequence is Troponin I, fast skeletal muscle (182 aa).

At glycine 2 the chain carries N-acetylglycine. Positions 2–48 are involved in binding TNC; that stretch reads GDEEKRNRAITARRQHLKSVMLQIAATELEKEESRREAEKQNYLAEH. Residue threonine 12 is modified to Phosphothreonine. The segment at 97-117 is involved in binding TNC and actin; sequence NQKLFDLRGKFKRPPLRRVRM. Serine 118 is modified (phosphoserine).

It belongs to the troponin I family. In terms of assembly, binds to actin and tropomyosin.

Troponin I is the inhibitory subunit of troponin, the thin filament regulatory complex which confers calcium-sensitivity to striated muscle actomyosin ATPase activity. In Homo sapiens (Human), this protein is Troponin I, fast skeletal muscle (TNNI2).